The chain runs to 458 residues: MAALRAGRGAGWSLRGWRALWGGRWGKGPLLTPDLRALLTSGTPDPRTRVTYGTPSFRARLSVGVPEPRTCLRSRTSDLRARLIAGTPDPRTPEDSGTPGTRLRVWLAVALGAGGAVLLLFWGGGRGPPAVLASVLGSPPTSPRSQYNFIADVVEKTAPAVVYIEILGRHPFSGREVPISNGSGFVVAADGLIVTNAHVVADRRRVRVRLPSGDTYEAVVTAVDPVADIATLRIQTKEPLPTLPLGRSADVRQGEFVVAMGSPFALQNTITSGIVSSAQRPAKDLGLPQTNVEYIQTDAAIDFGNSGGPLVNLDGEVIGVNTMKVTSGISFAIPSDRLREFLHRGEKKNSWFGISGSQRRYIGVMMLTLTPSILAELQLREPSFPDVQHGVLIHKVILDSPAHRAGLRPGDVILAIGEQLVQNAEDIYEAVRTQSQLAVRIRRGQETLTLYVTPEVTE.

The N-terminal 31 residues, methionine 1–leucine 31, are a transit peptide targeting the mitochondrion. Residues threonine 32–alanine 133 constitute a propeptide that is removed on maturation. The chain crosses the membrane as a helical span at residues valine 105 to glycine 125. An IAP-binding motif motif is present at residues serine 134 to glycine 137. Residues isoleucine 166–leucine 342 are serine protease. Catalysis depends on charge relay system residues histidine 198, aspartate 228, and serine 306. The region spanning valine 364–glutamine 445 is the PDZ domain.

Belongs to the peptidase S1C family. In terms of assembly, homotrimer. Interacts with MXI2. Interacts with THAP5 under apoptotic conditions. The mature protein, but not the precursor, binds to BIRC2/c-IAP1, BIRC3/c-IAP2 and XIAP/BIRC4. Interacts with BIRC6/bruce. Interacts with AREL1 (via HECT domain); in the cytoplasm following induction of apoptosis. Ubiquitinated by BIRC6; this activity is inhibited by DIABLO/SMAC. Post-translationally, autoproteolytically activated.

The protein localises to the mitochondrion intermembrane space. It localises to the mitochondrion membrane. It catalyses the reaction Cleavage of non-polar aliphatic amino-acids at the P1 position, with a preference for Val, Ile and Met. At the P2 and P3 positions, Arg is selected most strongly with a secondary preference for other hydrophilic residues.. Its activity is regulated as follows. Inhibited by BIRC6. Functionally, serine protease that shows proteolytic activity against a non-specific substrate beta-casein. Promotes apoptosis by either relieving the inhibition of BIRC proteins on caspases, leading to an increase in caspase activity; or by a BIRC inhibition-independent, caspase-independent and serine protease activity-dependent mechanism. Cleaves BIRC6 and relieves its inhibition on CASP3, CASP7 and CASP9, but it is also prone to inhibition by BIRC6. Cleaves THAP5 and promotes its degradation during apoptosis. This Bos taurus (Bovine) protein is Serine protease HTRA2, mitochondrial (HTRA2).